A 1316-amino-acid polypeptide reads, in one-letter code: MLDVNFFDELRIGLATAEDIRQWSYGEVKKPETINYRTLKPEKDGLFCEKIFGPTRDWECYCGKYKRVRFKGIICERCGVEVTRAKVRRERMGHIELAAPVTHIWYFKGVPSRLGYLLDLAPKDLEKIIYFAAYVITSVDEEMRHNELSTLEAEMAVERKAVEDQRDGELEARAQKLEADLAELEAEGAKADARRKVRDGGEREMRQIRDRAQRELDRLEDIWSTFTKLAPKQLIVDENLYRELVDRYGEYFTGAMGAESIQKLIENFDIDAEAESLRDVIRNGKGQKKLRALKRLKVVAAFQQSGNSPMGMVLDAVPVIPPELRPMVQLDGGRFATSDLNDLYRRVINRNNRLKRLIDLGAPEIIVNNEKRMLQESVDALFDNGRRGRPVTGPGNRPLKSLSDLLKGKQGRFRQNLLGKRVDYSGRSVIVVGPQLKLHQCGLPKLMALELFKPFVMKRLVDLNHAQNIKSAKRMVERQRPQVWDVLEEVIAEHPVLLNRAPTLHRLGIQAFEPMLVEGKAIQLHPLVCEAFNADFDGDQMAVHLPLSAEAQAEARILMLSSNNILSPASGRPLAMPRLDMVTGLYYLTTEVPEDTGEYQPASGDHPETGVYSSPAEAIMAADRGVLSVRAKIKVRLTQLRPPVEIEAELFGHSGWQPGDAWMAETTLGRVMFNELLPLGYPFVNKQMHKKVQAAIINDLAERYPMIVVAQTVDKLKDAGFYWATRSGVTVSMADVLVPPRKKEILDHYEERADKVEKQFQRGALNHDERNEALVEIWKEATDEVGQALREHYPDDNPIITIVDSGATGNFTQTRTLAGMKGLVTNPKGEFIPRPVKSSFREGLTVLEYFINTHGARKGLADTALRTADSGYLTRRLVDVSQDVIVREHDCQTERGIVVELAERAPDGTLIRDPYIETSAYARTLGTDAVDEAGNVIVERGQDLGDPEIDALLAAGITQVKVRSVLTCATSTGVCATCYGRSMATGKLVDIGEAVGIVAAQSIGEPGTQLTMRTFHQGGVGEDITGGLPRVQELFEARVPRGKAPIADVTGRVRLEDGERFYKITIVPDDGGEEVVYDKISKRQRLRVFKHEDGSERVLSDGDHVEVGQQLMEGSADPHEVLRVQGPREVQIHLVREVQEVYRAQGVSIHDKHIEVIVRQMLRRVTIIDSGSTEFLPGSLIDRAEFEAENRRVVAEGGEPAAGRPVLMGITKASLATDSWLSAASFQETTRVLTDAAINCRSDKLNGLKENVIIGKLIPAGTGINRYRNIAVQPTEEARAAAYTIPSYEDQYYSPDFGAATGAAVPLDDYGYSDYR.

Zn(2+)-binding residues include cysteine 60, cysteine 62, cysteine 75, and cysteine 78. The Mg(2+) site is built by aspartate 535, aspartate 537, and aspartate 539. 4 residues coordinate Zn(2+): cysteine 891, cysteine 968, cysteine 975, and cysteine 978.

It belongs to the RNA polymerase beta' chain family. As to quaternary structure, the RNAP catalytic core consists of 2 alpha, 1 beta, 1 beta' and 1 omega subunit. When a sigma factor is associated with the core the holoenzyme is formed, which can initiate transcription. It depends on Mg(2+) as a cofactor. The cofactor is Zn(2+).

It catalyses the reaction RNA(n) + a ribonucleoside 5'-triphosphate = RNA(n+1) + diphosphate. Its function is as follows. DNA-dependent RNA polymerase catalyzes the transcription of DNA into RNA using the four ribonucleoside triphosphates as substrates. The sequence is that of DNA-directed RNA polymerase subunit beta' from Mycobacterium tuberculosis (strain CDC 1551 / Oshkosh).